A 547-amino-acid chain; its full sequence is Chaperonin GroEL (547 aa).

ATP contacts are provided by residues 30–33 (TLGP), K51, 87–91 (DGTTT), G415, 479–481 (NAA), and D495.

This sequence belongs to the chaperonin (HSP60) family. Forms a cylinder of 14 subunits composed of two heptameric rings stacked back-to-back. Interacts with the co-chaperonin GroES.

It is found in the cytoplasm. It catalyses the reaction ATP + H2O + a folded polypeptide = ADP + phosphate + an unfolded polypeptide.. Together with its co-chaperonin GroES, plays an essential role in assisting protein folding. The GroEL-GroES system forms a nano-cage that allows encapsulation of the non-native substrate proteins and provides a physical environment optimized to promote and accelerate protein folding. This is Chaperonin GroEL from Pseudomonas fluorescens (strain ATCC BAA-477 / NRRL B-23932 / Pf-5).